The following is a 208-amino-acid chain: Small ribosomal subunit protein uS4 (208 aa).

An S4 RNA-binding domain is found at 98–158 (RRLDNIVYRL…EKSRKVASIN (61 aa)).

It belongs to the universal ribosomal protein uS4 family. As to quaternary structure, part of the 30S ribosomal subunit. Contacts protein S5. The interaction surface between S4 and S5 is involved in control of translational fidelity.

One of the primary rRNA binding proteins, it binds directly to 16S rRNA where it nucleates assembly of the body of the 30S subunit. Functionally, with S5 and S12 plays an important role in translational accuracy. The chain is Small ribosomal subunit protein uS4 from Geotalea daltonii (strain DSM 22248 / JCM 15807 / FRC-32) (Geobacter daltonii).